A 201-amino-acid chain; its full sequence is Akirin (201 aa).

The interval 1–133 is disordered; the sequence is MACATLKRAL…PRRPDSPQNL (133 aa). The short motif at 20 to 25 is the Nuclear localization signal element; that stretch reads PKRRRC. Phosphoserine occurs at positions 39 and 41. 2 stretches are compositionally biased toward polar residues: residues 44–57 and 65–75; these read GPSTSAGLPHTPSN and EPSPFSESSLA. Ser-67 carries the post-translational modification Phosphoserine. Low complexity predominate over residues 112–122; sequence SESSGSEMGPE. 2 positions are modified to phosphoserine: Ser-123 and Ser-129.

The protein belongs to the akirin family. As to quaternary structure, interacts with dmap1. Interacts with bap60 and rel; interaction is immune stimulation-dependent; activates selected rel target gene promoters. Interacts with bap55; interaction is immune stimulation-dependent. Interacts with twi. Polyubiquitinated via 'Lys-63'-linked ubiquitin by Hyd, promoting interaction with rel. As to expression, ubiquitous.

The protein resides in the nucleus. Its function is as follows. Molecular adapter that acts as a bridge between a variety of multiprotein complexes, and which is required for embryonic development and for normal innate immune response. Acts as a regulator of embryonic myogenesis by bridging Twist (twi) with the SWI/SNF-like Brahma complex, promoting expression of twi-regulated genes during myogenesis. Effector of immune deficiency pathway (Imd) by acting either downstream of, or at the level of, the NF-kappa-B factor Relish (Rel). Acts by bridging the NF-kappa-B factor Rel and the Brahma complex through bap60 interaction, leading to activation a subset of NF-kappa-B factor Relish (Rel) effector genes. Not part of the Toll pathway. Required for the formation of the heart by promoting expression ot tinman (tin). The polypeptide is Akirin (Drosophila melanogaster (Fruit fly)).